We begin with the raw amino-acid sequence, 932 residues long: RNA-binding protein 12 (932 aa).

Residues Ile97 to Arg116 form a disordered region. Low complexity predominate over residues Pro98–Arg116. The RRM 1 domain maps to Leu304 to Glu379. Phosphoserine occurs at positions 352 and 375. A disordered region spans residues Gln393–Ser424. The span at Leu408–Gln417 shows a compositional bias: polar residues. Phosphoserine is present on residues Ser420, Ser422, and Ser424. An RRM 2 domain is found at Phe430–Lys507. Ser525 bears the Phosphoserine mark. Low complexity predominate over residues Asn717 to Gly734. Residues Asn717–Pro853 form a disordered region. Residues Ser783–Gly811 are compositionally biased toward gly residues. The span at Ala824–Gly836 shows a compositional bias: pro residues. An RRM 3 domain is found at Thr856 to Gly932.

It localises to the nucleus. The chain is RNA-binding protein 12 (RBM12) from Macaca mulatta (Rhesus macaque).